A 295-amino-acid chain; its full sequence is Acetyl-coenzyme A carboxylase carboxyl transferase subunit beta (295 aa).

The disordered stretch occupies residues 1–20 (MSWLSKLMPSGIRTENTPAK). The 268-residue stretch at 28 to 295 (LWEKCSNCGS…QPHPQDADAA (268 aa)) folds into the CoA carboxyltransferase N-terminal domain. Zn(2+)-binding residues include C32, C35, C51, and C54. A C4-type zinc finger spans residues 32 to 54 (CSNCGSALYGPELEENLEVCPKC).

It belongs to the AccD/PCCB family. In terms of assembly, acetyl-CoA carboxylase is a heterohexamer composed of biotin carboxyl carrier protein (AccB), biotin carboxylase (AccC) and two subunits each of ACCase subunit alpha (AccA) and ACCase subunit beta (AccD). It depends on Zn(2+) as a cofactor.

The protein localises to the cytoplasm. It catalyses the reaction N(6)-carboxybiotinyl-L-lysyl-[protein] + acetyl-CoA = N(6)-biotinyl-L-lysyl-[protein] + malonyl-CoA. It functions in the pathway lipid metabolism; malonyl-CoA biosynthesis; malonyl-CoA from acetyl-CoA: step 1/1. In terms of biological role, component of the acetyl coenzyme A carboxylase (ACC) complex. Biotin carboxylase (BC) catalyzes the carboxylation of biotin on its carrier protein (BCCP) and then the CO(2) group is transferred by the transcarboxylase to acetyl-CoA to form malonyl-CoA. The chain is Acetyl-coenzyme A carboxylase carboxyl transferase subunit beta from Xanthomonas campestris pv. campestris (strain 8004).